The primary structure comprises 194 residues: MIASLSGLLEAVRPGSVVVNMHGIGFLVRVPQSFNPEVDAEVKLYTSLQVREDSVSLYGFASVLECTVFEQLITISGVGPRVALAILSVLTPAEVAAAVLEGDDKPLQRVSGVGKKLAGTIVLQLAGKLTSVPLENRKQEQAVDRSAEIVQALIGLGWQRQESAAAVESVLEKDQSLTMPEILRNALRYLAKQE.

Residues M1–A61 form a domain I region. The segment at S62–N136 is domain II. A flexible linker region spans residues N136 to E140. Residues Q141–E194 are domain III.

It belongs to the RuvA family. In terms of assembly, homotetramer. Forms an RuvA(8)-RuvB(12)-Holliday junction (HJ) complex. HJ DNA is sandwiched between 2 RuvA tetramers; dsDNA enters through RuvA and exits via RuvB. An RuvB hexamer assembles on each DNA strand where it exits the tetramer. Each RuvB hexamer is contacted by two RuvA subunits (via domain III) on 2 adjacent RuvB subunits; this complex drives branch migration. In the full resolvosome a probable DNA-RuvA(4)-RuvB(12)-RuvC(2) complex forms which resolves the HJ.

It is found in the cytoplasm. Its function is as follows. The RuvA-RuvB-RuvC complex processes Holliday junction (HJ) DNA during genetic recombination and DNA repair, while the RuvA-RuvB complex plays an important role in the rescue of blocked DNA replication forks via replication fork reversal (RFR). RuvA specifically binds to HJ cruciform DNA, conferring on it an open structure. The RuvB hexamer acts as an ATP-dependent pump, pulling dsDNA into and through the RuvAB complex. HJ branch migration allows RuvC to scan DNA until it finds its consensus sequence, where it cleaves and resolves the cruciform DNA. In Tropheryma whipplei (strain Twist) (Whipple's bacillus), this protein is Holliday junction branch migration complex subunit RuvA.